The primary structure comprises 127 residues: Large-conductance mechanosensitive channel (127 aa).

3 helical membrane passes run 9–29, 32–52, and 75–95; these read EFAM…GVAF, IVTA…LGGV, and VIDF…INLL.

It belongs to the MscL family. Homopentamer.

The protein resides in the cell inner membrane. Channel that opens in response to stretch forces in the membrane lipid bilayer. May participate in the regulation of osmotic pressure changes within the cell. This is Large-conductance mechanosensitive channel from Legionella pneumophila (strain Lens).